Consider the following 254-residue polypeptide: Type III pantothenate kinase (254 aa).

Residue 7 to 14 (DVGNTRLK) participates in ATP binding. Substrate-binding positions include Tyr96 and 103-106 (GSDR). Asp105 (proton acceptor) is an active-site residue. Thr133 contributes to the ATP binding site. Residue Thr183 participates in substrate binding.

The protein belongs to the type III pantothenate kinase family. In terms of assembly, homodimer. NH4(+) serves as cofactor. Requires K(+) as cofactor.

Its subcellular location is the cytoplasm. It carries out the reaction (R)-pantothenate + ATP = (R)-4'-phosphopantothenate + ADP + H(+). It functions in the pathway cofactor biosynthesis; coenzyme A biosynthesis; CoA from (R)-pantothenate: step 1/5. Catalyzes the phosphorylation of pantothenate (Pan), the first step in CoA biosynthesis. This chain is Type III pantothenate kinase, found in Paracidovorax citrulli (strain AAC00-1) (Acidovorax citrulli).